The chain runs to 1093 residues: Synaptopodin-2 (1093 aa).

Residues 1 to 180 (MGTGDFICIS…PDSQRGRVAE (180 aa)) form an interaction with VPS18 region. Residues 6–88 (FICISMTGGA…SLQMLIKRPS (83 aa)) form the PDZ domain. Disordered stretches follow at residues 144 to 174 (ENQR…PDSQ) and 211 to 233 (ASGP…DPNL). Positions 222–233 (EKSKSPDPDPNL) are enriched in basic and acidic residues. 4 positions are modified to phosphoserine: serine 274, serine 310, serine 329, and serine 330. The disordered stretch occupies residues 329–369 (SSEGTEQGEDPRSEKDHSRPHKHRARHARLRRSESLSEKQV). Threonine 333 carries the phosphothreonine modification. Basic residues predominate over residues 346–358 (SRPHKHRARHARL). Basic and acidic residues predominate over residues 359 to 369 (RRSESLSEKQV). The short motif at 398-406 (KKRRRRARK) is the Nuclear localization signal element. Interaction with ACTN2 regions lie at residues 481 to 663 (MEML…FYDS), 664 to 924 (SERI…PPVA), and 901 to 1093 (QSPT…VVEE). Disordered stretches follow at residues 507 to 803 (AQKE…GTVV) and 834 to 870 (AVAS…GMSG). F-actin binding stretches follow at residues 534–663 (TSYQ…FYDS) and 664–803 (SERI…GTVV). Phosphoserine is present on residues serine 548, serine 549, and serine 551. 2 stretches are compositionally biased toward polar residues: residues 565–579 (PQQN…TANI) and 595–611 (SVNQ…NMTS). Serine 604 is subject to Phosphoserine. The tract at residues 607-811 (RNMTSPIADF…VVSSIKIAQP (205 aa)) is interaction with YWHAB. Phosphothreonine is present on threonine 610. Phosphoserine is present on serine 611. Residues 615–626 (DFPAPPPYSAVT) form an interaction with BAG3 region. Composition is skewed to pro residues over residues 617 to 630 (PAPP…PPPD) and 644 to 655 (AQPPPWPQPAPW). The PPPY motif motif lies at 619–622 (PPPY). Phosphotyrosine is present on tyrosine 622. Threonine 626 carries the phosphothreonine modification. The segment covering 663–674 (SSERIASRDERI) has biased composition (basic and acidic residues). An F-actin bundling activity region spans residues 664–916 (SERIASRDER…LPASWKYSSN (253 aa)). Serine 705 and serine 729 each carry phosphoserine. Residues 751-900 (AKQKTPPPVA…DTVQAHAARA (150 aa)) are actin binding. Threonine 755 and threonine 774 each carry phosphothreonine. A compositionally biased stretch (low complexity) spans 762 to 784 (KPAVKSSSSQPVTPVSPVWSPGV). Serine 777 and serine 781 each carry phosphoserine. Composition is skewed to polar residues over residues 793–803 (PTSNPSKGTVV) and 835–853 (VASQ…TVNA). Positions 810 to 1093 (QPSYPPARPA…QVWKPSVVEE (284 aa)) are interaction with FLNC. Phosphoserine is present on residues serine 902, serine 906, and serine 910. The tract at residues 937-956 (ALKSQPSAAQPSKMGKKKGK) is disordered. The segment at 1000–1019 (LAMKQALPPRPVNAASPTNV) is interaction with ZYX. Phosphoserine is present on serine 1015. The span at 1041 to 1050 (SSPVSASPVP) shows a compositional bias: low complexity. A disordered region spans residues 1041 to 1064 (SSPVSASPVPVGIPTSPKQESASS). A Phosphoserine modification is found at serine 1056.

This sequence belongs to the synaptopodin family. May self-associate in muscle cells under oxidative stress. Binds F-actin. Interacts with ACTN2; ACTN2 is proposed to anchor SYOP2 at Z lines in mature myocytes. Interacts with AKAP6, PPP3CA and CAMK2A. Interacts (phosphorylated form) with YWHAB; YWHAB competes with ACTN2 for interaction with SYNPO2. Interacts with KPNA2; mediating nuclear import of SYNOP2; dependent on interaction with YWHAB. Interacts with IPO13; may be implicated in SYNOP2 nuclear import. Interacts with ZYX, FLNC, ILK. Interacts with BAG3 (via WW 1 domain). May associate with the CASA complex consisting of HSPA8, HSPB8 and BAG3. Interacts with VPS18. Post-translationally, phosphorylated by PKA, and by CaMK2 at multiple sites. Dephosphorylated by calcineurin; abrogating interaction with YWHAB and impairing nuclear import. Phosphorylated by ILK. In terms of tissue distribution, expressed in heart muscle. Isoform 5 is specifically expressed in skeletal muscle.

The protein resides in the nucleus. It is found in the cytoplasm. Its subcellular location is the cytoskeleton. The protein localises to the myofibril. It localises to the sarcomere. The protein resides in the z line. It is found in the cell junction. Its subcellular location is the focal adhesion. Functionally, has an actin-binding and actin-bundling activity. Can induce the formation of F-actin networks in an isoform-specific manner. At the sarcomeric Z lines is proposed to act as adapter protein that links nascent myofibers to the sarcolemma via ZYX and may play a role in early assembly and stabilization of the Z lines. Involved in autophagosome formation. May play a role in chaperone-assisted selective autophagy (CASA) involved in Z lines maintenance in striated muscle under mechanical tension; may link the client-processing CASA chaperone machinery to a membrane-tethering and fusion complex providing autophagosome membranes. Involved in regulation of cell migration. May be a tumor suppressor. In terms of biological role, involved in regulation of cell migration. Can induce formation of thick, irregular actin bundles in the cell body. Involved in regulation of cell migration. Can induce long, well-organized actin bundles frequently orientated in parallel along the long axis of the cell showing characteristics of contractile ventral stress fibers. Its function is as follows. Involved in regulation of cell migration. Can induce an amorphous actin meshwork throughout the cell body containing a mixture of long and short, randomly organized thick and thin actin bundles. Functionally, can induce long, well-organized actin bundles frequently orientated in parallel along the long axis of the cell showing characteristics of contractile ventral stress fibers. In terms of biological role, involved in regulation of cell migration in part dependent on the Rho-ROCK cascade; can promote formation of nascent focal adhesions, actin bundles at the leading cell edge and lamellipodia. Can induce formation of thick, irregular actin bundles in the cell body; the induced actin network is associated with enhanced cell migration in vitro. In Homo sapiens (Human), this protein is Synaptopodin-2 (SYNPO2).